We begin with the raw amino-acid sequence, 402 residues long: Deacetylase Oant_2987 (402 aa).

Zn(2+) is bound by residues H70, H72, K168, H201, H224, and D284. K168 is modified (N6-carboxylysine).

Belongs to the metallo-dependent hydrolases superfamily. Atu3266/EF_0837 deacetylase family. Zn(2+) is required as a cofactor.

Functionally, esterase that catalyzes the deacetylation of acetyl-(R)-mandelate (in vitro). Can also hydrolyze acetyl glycolate, but with lower efficiency. Has very low N-acetyl-D-amino acid deacetylase activity with N-acetyl-D-serine and N-acetyl-D-threonine (in vitro). Theoretical substrate docking studies suggest that other N-acetylated amino acids may optimally occupy the active site and may in fact be the physiological substrates. The protein is Deacetylase Oant_2987 of Brucella anthropi (strain ATCC 49188 / DSM 6882 / CCUG 24695 / JCM 21032 / LMG 3331 / NBRC 15819 / NCTC 12168 / Alc 37) (Ochrobactrum anthropi).